A 512-amino-acid polypeptide reads, in one-letter code: PTS system mannitol-specific EIICB component (512 aa).

Residues 1–28 lie on the Cytoplasmic side of the membrane; it reads MSQTEEKKGIGRRVQAFGSFLSSMIMPN. The PTS EIIC type-2 domain occupies 17–349; sequence FGSFLSSMIM…MKFTKEPKQD (333 aa). The helical transmembrane segment at 29 to 50 threads the bilayer; sequence IGAFIAWGFIAAIFIDNGWFPN. Residues 51 to 54 are Extracellular-facing; the sequence is KDLA. Residues 55-75 traverse the membrane as a helical segment; the sequence is TLAGPMITYLIPLLIAFSGGR. The Cytoplasmic portion of the chain corresponds to 76-139; that stretch reads LIYDLRGGII…QGFEMLFNNF (64 aa). The chain crosses the membrane as a helical span at residues 140 to 161; that stretch reads SAGILGFIMTIAGFKILAPLMK. Residues 162 to 170 lie on the Extracellular side of the membrane; sequence FIMHILSVA. Residues 171 to 191 form a helical membrane-spanning segment; that stretch reads VEALVHAHLLPLVSILVEPAK. At 192 to 278 the chain is on the cytoplasmic side; sequence IVFLNNAINH…VLMRPLLFIA (87 aa). The chain crosses the membrane as a helical span at residues 279–298; that stretch reads VILGGMTGVATYQATGFGFK. Topologically, residues 299–318 are extracellular; that stretch reads SPASPGSFIVYCLNAPRGEF. Residues 319-340 traverse the membrane as a helical segment; it reads LHMLLGVFLATLVSFVVAALIM. The Cytoplasmic segment spans residues 341–512; that stretch reads KFTKEPKQDL…LNNLKKDDQA (172 aa). Positions 365-376 are enriched in low complexity; it reads SSVASKLVSSDK. Residues 365 to 401 form a disordered region; the sequence is SSVASKLVSSDKNVNTEENASGNVSETSSLDDDPEAL. Residues 380-392 are compositionally biased toward polar residues; the sequence is TEENASGNVSETS. A PTS EIIB type-2 domain is found at 419 to 512; the sequence is NHVIFACDAG…LNNLKKDDQA (94 aa). The Phosphocysteine intermediate; for EIIB activity role is filled by cysteine 425. Position 425 is a phosphocysteine; by EIIA (cysteine 425).

In terms of assembly, homodimer.

It is found in the cell membrane. The enzyme catalyses D-mannitol(out) + N(pros)-phospho-L-histidyl-[protein] = D-mannitol 1-phosphate(in) + L-histidyl-[protein]. Its function is as follows. The phosphoenolpyruvate-dependent sugar phosphotransferase system (sugar PTS), a major carbohydrate active transport system, catalyzes the phosphorylation of incoming sugar substrates concomitantly with their translocation across the cell membrane. The enzyme II CmtAB PTS system is involved in D-mannitol transport. This chain is PTS system mannitol-specific EIICB component (mtlA), found in Staphylococcus aureus (strain MRSA252).